A 502-amino-acid polypeptide reads, in one-letter code: ATP synthase subunit alpha (502 aa).

An ATP-binding site is contributed by 169 to 176 (GDRQTGKT).

Belongs to the ATPase alpha/beta chains family. F-type ATPases have 2 components, CF(1) - the catalytic core - and CF(0) - the membrane proton channel. CF(1) has five subunits: alpha(3), beta(3), gamma(1), delta(1), epsilon(1). CF(0) has three main subunits: a(1), b(2) and c(9-12). The alpha and beta chains form an alternating ring which encloses part of the gamma chain. CF(1) is attached to CF(0) by a central stalk formed by the gamma and epsilon chains, while a peripheral stalk is formed by the delta and b chains.

Its subcellular location is the cell membrane. The enzyme catalyses ATP + H2O + 4 H(+)(in) = ADP + phosphate + 5 H(+)(out). Its function is as follows. Produces ATP from ADP in the presence of a proton gradient across the membrane. The alpha chain is a regulatory subunit. In Clostridium perfringens (strain SM101 / Type A), this protein is ATP synthase subunit alpha.